We begin with the raw amino-acid sequence, 330 residues long: DNA-directed RNA polymerase subunit alpha (330 aa).

The alpha N-terminal domain (alpha-NTD) stretch occupies residues methionine 1–lysine 237. Positions phenylalanine 251 to glutamate 330 are alpha C-terminal domain (alpha-CTD).

It belongs to the RNA polymerase alpha chain family. As to quaternary structure, homodimer. The RNAP catalytic core consists of 2 alpha, 1 beta, 1 beta' and 1 omega subunit. When a sigma factor is associated with the core the holoenzyme is formed, which can initiate transcription.

It catalyses the reaction RNA(n) + a ribonucleoside 5'-triphosphate = RNA(n+1) + diphosphate. In terms of biological role, DNA-dependent RNA polymerase catalyzes the transcription of DNA into RNA using the four ribonucleoside triphosphates as substrates. This Legionella pneumophila (strain Paris) protein is DNA-directed RNA polymerase subunit alpha.